A 212-amino-acid polypeptide reads, in one-letter code: Root-specific lectin (212 aa).

Residues 1–26 (MKMMSTRALALGAAAVLAFAAATAHA) form the signal peptide. A Pyrrolidone carboxylic acid modification is found at Gln27. Chitin-binding type-1 domains follow at residues 27–68 (QRCG…ACYT), 69–111 (SKRC…PCRA), 112–154 (DIKC…ACST), and 155–197 (DKPC…GCDG). 16 disulfide bridges follow: Cys29/Cys44, Cys38/Cys50, Cys43/Cys57, Cys61/Cys66, Cys72/Cys87, Cys81/Cys93, Cys86/Cys100, Cys104/Cys109, Cys115/Cys130, Cys124/Cys136, Cys129/Cys143, Cys147/Cys152, Cys158/Cys173, Cys167/Cys179, Cys172/Cys186, and Cys190/Cys195. 36–38 (MEC) serves as a coordination point for substrate. 88–99 (SQWGYCGFGAEY) is a substrate binding site. 140–141 (SE) lines the substrate pocket. Asn206 carries an N-linked (GlcNAc...) asparagine glycan.

As to expression, in roots.

Carbohydrate binding. The chain is Root-specific lectin from Hordeum vulgare (Barley).